The sequence spans 527 residues: Catalase (527 aa).

The span at 1–22 (MSDSRDPASDQMKQWKEQRASQ) shows a compositional bias: basic and acidic residues. Residues 1–34 (MSDSRDPASDQMKQWKEQRASQRPDVLTTGGGNP) form a disordered region. S2 carries the N-acetylserine modification. S9 carries the phosphoserine modification. Residue K13 is modified to N6-succinyllysine. At S21 the chain carries Phosphoserine. Residues H75 and N148 contribute to the active site. NADP(+) is bound by residues H194, S201, R203, and N213. An N6-succinyllysine modification is found at K221. K233 carries the post-translational modification N6-acetyllysine. NADP(+)-binding residues include K237, W303, H305, and K306. K306 bears the N6-acetyllysine; alternate mark. K306 is subject to N6-succinyllysine; alternate. Y358 serves as a coordination point for heme. 2 positions are modified to phosphoserine: S417 and S422. K430 bears the N6-acetyllysine; alternate mark. K430 bears the N6-succinyllysine; alternate mark. S434 bears the Phosphoserine mark. 2 positions are modified to N6-acetyllysine; alternate: K449 and K480. N6-succinyllysine; alternate is present on residues K449 and K480. K499 bears the N6-acetyllysine mark. T511 carries the phosphothreonine modification. Position 517 is a phosphoserine (S517). K522 is modified (N6-succinyllysine). A Microbody targeting signal; atypical motif is present at residues 524–527 (KANL).

This sequence belongs to the catalase family. Homotetramer. Interacts (via microbody targeting signal) with PEX5, monomeric form interacts with PEX5, leading to its translocation into peroxisomes. The cofactor is heme. NADP(+) serves as cofactor.

The protein resides in the peroxisome matrix. It carries out the reaction 2 H2O2 = O2 + 2 H2O. Its function is as follows. Catalyzes the degradation of hydrogen peroxide (H(2)O(2)) generated by peroxisomal oxidases to water and oxygen, thereby protecting cells from the toxic effects of hydrogen peroxide. Promotes growth of cells including T-cells, B-cells, myeloid leukemia cells, melanoma cells, mastocytoma cells and normal and transformed fibroblast cells. This is Catalase (Cat) from Mus musculus (Mouse).